Reading from the N-terminus, the 475-residue chain is Aspartyl/glutamyl-tRNA(Asn/Gln) amidotransferase subunit B (475 aa).

The protein belongs to the GatB/GatE family. GatB subfamily. In terms of assembly, heterotrimer of A, B and C subunits.

The catalysed reaction is L-glutamyl-tRNA(Gln) + L-glutamine + ATP + H2O = L-glutaminyl-tRNA(Gln) + L-glutamate + ADP + phosphate + H(+). It carries out the reaction L-aspartyl-tRNA(Asn) + L-glutamine + ATP + H2O = L-asparaginyl-tRNA(Asn) + L-glutamate + ADP + phosphate + 2 H(+). In terms of biological role, allows the formation of correctly charged Asn-tRNA(Asn) or Gln-tRNA(Gln) through the transamidation of misacylated Asp-tRNA(Asn) or Glu-tRNA(Gln) in organisms which lack either or both of asparaginyl-tRNA or glutaminyl-tRNA synthetases. The reaction takes place in the presence of glutamine and ATP through an activated phospho-Asp-tRNA(Asn) or phospho-Glu-tRNA(Gln). The chain is Aspartyl/glutamyl-tRNA(Asn/Gln) amidotransferase subunit B from Pediococcus pentosaceus (strain ATCC 25745 / CCUG 21536 / LMG 10740 / 183-1w).